A 2711-amino-acid chain; its full sequence is Chromodomain-helicase-DNA-binding protein 6 (2711 aa).

4 stretches are compositionally biased toward basic and acidic residues: residues 1-12 (MKMKIQKKEKQL), 100-115 (EPGEQEGTKGSKDREP), 122-151 (EPKEPKEPRRAKEPKRAKEPKETKQKDGVK), and 158-171 (EASGTKEGKEKRSC). Disordered stretches follow at residues 1-52 (MKMK…EEAA) and 66-243 (EEAD…QVKR). The tract at residues 1-746 (MKMKIQKKEK…MMELRKCCNH (746 aa)) is required for DNA-dependent ATPase activity. The segment covering 214–224 (SLPNPSLQSPE) has biased composition (low complexity). 2 consecutive Chromo domains span residues 291–342 (NIIE…KDPR) and 374–438 (IEID…KHVE). Residues 472–646 (LFNWYNRKNC…FSLLNFLEPS (175 aa)) enclose the Helicase ATP-binding domain. 485 to 492 (DEMGLGKT) is an ATP binding site. The DEAH box motif lies at 597-600 (DEAH). Positions 786–955 (LIDKLLPKLI…LSKMEVEDLL (170 aa)) constitute a Helicase C-terminal domain. The interval 1318-1389 (SLSAEQGVTD…SDPDKSPWPV (72 aa)) is disordered. Polar residues predominate over residues 1320 to 1329 (SAEQGVTDGT). A compositionally biased stretch (basic and acidic residues) spans 1332-1350 (IPERGNIDKEDSAEDKLDG). A Myb-like domain is found at 1448 to 1502 (RWTRREQADFYRTVSSFGVVYDQEKKAFDWTQFRIISRLDKKSDESLEHYFYSFV). The residue at position 1865 (S1865) is a Phosphoserine. Disordered stretches follow at residues 1951-1978 (SEDSEVEKPKAYQPDLYRSKANNSTVEG), 1997-2059 (EPWK…ASGI), 2124-2147 (LPTPVLSSSAGSRSSLSEPEATEH), 2321-2350 (TTLSTTHPEVPGATSSAPEPTAAASSQAEK), 2373-2419 (GFGT…RGFL), 2550-2602 (SASL…ITTS), and 2641-2711 (RHSE…EDTN). The segment covering 2017 to 2036 (SEPKPEDMDFENKDDYEKDG) has biased composition (basic and acidic residues). Low complexity-rich tracts occupy residues 2130–2140 (SSSAGSRSSLS) and 2333–2349 (ATSSAPEPTAAASSQAE). Residues 2550-2563 (SASLASTKSGTSAT) show a composition bias toward low complexity. Residues 2565 to 2586 (KSTEDKLSGHDVNTDALVDDKP) show a composition bias toward basic and acidic residues. Composition is skewed to polar residues over residues 2591-2602 (FSDQSEPTITTS) and 2677-2688 (SDQNCTESSATV). The span at 2690–2711 (PEREHVAQAREEGLKDSNEDTN) shows a compositional bias: basic and acidic residues.

Belongs to the SNF2/RAD54 helicase family. As to quaternary structure, interacts with NFE2L2; involved in activation of the transcription. As to expression, widely expressed.

The protein resides in the nucleus. Its subcellular location is the nucleoplasm. It carries out the reaction ATP + H2O = ADP + phosphate + H(+). In terms of biological role, ATP-dependent chromatin-remodeling factor. Regulates transcription by disrupting nucleosomes in a largely non-sliding manner which strongly increases the accessibility of chromatin. Activates transcription of specific genes in response to oxidative stress through interaction with NFE2L2. The polypeptide is Chromodomain-helicase-DNA-binding protein 6 (Chd6) (Mus musculus (Mouse)).